The sequence spans 293 residues: 5'-3' exoribonuclease Rnm (293 aa).

Mn(2+) contacts are provided by H13, H15, D20, H45, E72, H83, H198, D255, and H257.

The protein belongs to the PHP family. TrpH/YciV subfamily. It depends on Mn(2+) as a cofactor.

It catalyses the reaction a ribonucleoside 3',5'-bisphosphate + H2O = a ribonucleoside 5'-phosphate + phosphate. Functionally, exoribonuclease that catalyzes the last steps of 5S, 16S and 23S rRNA 5'-end maturation. Removes 3 nucleotides (nt) from the 5' end of 5S, 16S and 23S rRNA precursors to generate the mature 5' ends. Precursors with longer extensions are not processed (7 nt at the 5' end of pre-23S rRNA or 66 nt at the 5'-end of 16S rRNA are not processed). 5S and 23S rRNA maturation occurs more efficiently and accurately on ribosomal particles as compared to free RNA; the enzyme overdigests free RNA but generates the correct 5'-end in ribosomes from rnm deletion strains. Efficiently catalyzes the hydrolysis of the 3'-phosphate from 3',5'-bis-phosphonucleotides as well as the successive hydrolysis of 5'-phosphomononucleotides from the 5'-end of short pieces of RNA and DNA, with no specificity toward the identity of the nucleotide base. Is more efficient at hydrolyzing RNA oligonucleotides than DNA oligonucleotides. This enzyme can also hydrolyze annealed DNA duplexes, albeit at a catalytic efficiency approximately 10-fold lower than that of the corresponding single-stranded oligonucleotides. The polypeptide is 5'-3' exoribonuclease Rnm (Escherichia coli (strain K12)).